We begin with the raw amino-acid sequence, 215 residues long: Pyrrolidone-carboxylate peptidase (215 aa).

Active-site residues include glutamate 80, cysteine 143, and histidine 167.

It belongs to the peptidase C15 family. Homotetramer.

It localises to the cytoplasm. It catalyses the reaction Release of an N-terminal pyroglutamyl group from a polypeptide, the second amino acid generally not being Pro.. Functionally, removes 5-oxoproline from various penultimate amino acid residues except L-proline. This is Pyrrolidone-carboxylate peptidase from Bacillus thuringiensis (strain Al Hakam).